A 312-amino-acid polypeptide reads, in one-letter code: Ribonuclease Z (312 aa).

7 residues coordinate Zn(2+): His-62, His-64, Asp-66, His-67, His-144, Asp-215, and His-273. Asp-66 functions as the Proton acceptor in the catalytic mechanism.

The protein belongs to the RNase Z family. Homodimer. Zn(2+) serves as cofactor.

The catalysed reaction is Endonucleolytic cleavage of RNA, removing extra 3' nucleotides from tRNA precursor, generating 3' termini of tRNAs. A 3'-hydroxy group is left at the tRNA terminus and a 5'-phosphoryl group is left at the trailer molecule.. Functionally, zinc phosphodiesterase, which displays some tRNA 3'-processing endonuclease activity. Probably involved in tRNA maturation, by removing a 3'-trailer from precursor tRNA. This Prochlorococcus marinus (strain AS9601) protein is Ribonuclease Z.